The chain runs to 284 residues: MKLVIVSGRSGSGKSVALRVLEDLGYYCVDNLPLPLIGSLLAQLKSSNDLVAISVDVRNIAEQGKVLEQQLALLPPETEISSFFLNSSDKVLLKRFSETRRLHPLSRSQMSLQEAIKLEGRLLEPIAKMVDHHIDTSLLNVYELSDQVRQILLGSVDKELVINIESFGFKHGMPTEADFMFDVRFLPNPHWETELRPLTGLDVPVQEFLARQPLVHKLIWQIENLFETWMPHLERNNRSYLTIAIGCTGGQHRSVYIADQLAKRFANGKHVVNARHRELGDVKA.

An ATP-binding site is contributed by 8–15 (GRSGSGKS). Residue 56–59 (DVRN) participates in GTP binding.

This sequence belongs to the RapZ-like family.

Displays ATPase and GTPase activities. The chain is Nucleotide-binding protein Sden_0486 from Shewanella denitrificans (strain OS217 / ATCC BAA-1090 / DSM 15013).